A 319-amino-acid chain; its full sequence is Very-long-chain 3-oxoacyl-CoA reductase-A (319 aa).

Residues 17–37 form a helical membrane-spanning segment; it reads LFWVGALITASLALYVVYKTI. Residue 56-85 coordinates NADP(+); the sequence is GKWAVVTGATDGIGKSYAEELARRGFSMML. The next 2 membrane-spanning stretches (helical) occupy residues 188–208 and 282–302; these read GVILNISSASGMFPVPLLTIY and AVMGWVTTILAPIDLVLNLGL. S195 lines the substrate pocket. Residue Y208 is the Proton acceptor of the active site.

This sequence belongs to the short-chain dehydrogenases/reductases (SDR) family. 17-beta-HSD 3 subfamily.

The protein resides in the endoplasmic reticulum membrane. It carries out the reaction a very-long-chain (3R)-3-hydroxyacyl-CoA + NADP(+) = a very-long-chain 3-oxoacyl-CoA + NADPH + H(+). It catalyses the reaction 17beta-estradiol + NAD(+) = estrone + NADH + H(+). The enzyme catalyses 17beta-estradiol + NADP(+) = estrone + NADPH + H(+). Its pathway is lipid metabolism; fatty acid biosynthesis. It functions in the pathway steroid biosynthesis; estrogen biosynthesis. In terms of biological role, catalyzes the second of the four reactions of the long-chain fatty acids elongation cycle. This endoplasmic reticulum-bound enzymatic process, allows the addition of two carbons to the chain of long- and very long-chain fatty acids/VLCFAs per cycle. This enzyme has a 3-ketoacyl-CoA reductase activity, reducing 3-ketoacyl-CoA to 3-hydroxyacyl-CoA, within each cycle of fatty acid elongation. Thereby, it may participate in the production of VLCFAs of different chain lengths that are involved in multiple biological processes as precursors of membrane lipids and lipid mediators. May also catalyze the transformation of estrone (E1) into estradiol (E2) and play a role in estrogen formation. This is Very-long-chain 3-oxoacyl-CoA reductase-A (hsd17b12a) from Danio rerio (Zebrafish).